Consider the following 1380-residue polypeptide: DNA-directed RNA polymerase subunit beta (1380 aa).

The protein belongs to the RNA polymerase beta chain family. As to quaternary structure, the RNAP catalytic core consists of 2 alpha, 1 beta, 1 beta' and 1 omega subunit. When a sigma factor is associated with the core the holoenzyme is formed, which can initiate transcription.

The catalysed reaction is RNA(n) + a ribonucleoside 5'-triphosphate = RNA(n+1) + diphosphate. In terms of biological role, DNA-dependent RNA polymerase catalyzes the transcription of DNA into RNA using the four ribonucleoside triphosphates as substrates. The chain is DNA-directed RNA polymerase subunit beta from Nitrobacter hamburgensis (strain DSM 10229 / NCIMB 13809 / X14).